The following is a 907-amino-acid chain: Leucine-rich repeat-containing G-protein coupled receptor 5 (907 aa).

Positions 1-21 are cleaved as a signal peptide; sequence MDTSSVGVLLSLPVLLQLAAG. Residues 22-553 are Extracellular-facing; that stretch reads GGSPRPGTLL…SPGPFKLCEY (532 aa). One can recognise an LRRNT domain in the interval 33-64; sequence GCPAHCQCEPDGRMLLRVDCSDLGLSELPSNL. 2 disulfide bridges follow: cysteine 34–cysteine 40 and cysteine 38–cysteine 52. 17 LRR repeats span residues 44–64, 65–88, 89–112, 114–136, 137–160, 162–184, 185–208, 209–232, 233–256, 257–279, 281–303, 304–327, 328–350, 351–375, 377–396, 397–420, and 421–444; these read GRMLLRVDCSDLGLSELPSNL, SVFTSYLDLSMNNISQLPPSPLHS, LRFLEELRLAGNALTYIPKGAFAG, YSLKVLMLQNNHLRQVPTEALQN, LRSLQSLRLDANRISSVPPSCFSG, HSLRHLWLDDNALTEIPVQAFRS, LSALQAMTLALNKIHHIPDYAFGN, LSSLVVLHLHNNRIHSLGKKCFDG, LHSLETLDLNYNNLDEFPTAVRTL, SNLKELGFHSNNIKSIPEKAFVG, PSLITIHFYDNPIQLVGRSAFQH, LPELRTLTLNGASQITEFPDLTGT, ASLESLTLTGAQISSLPQTVCDQ, LPNLQVLDLSYNLLEDLPSFSVCQK, QKIDLRHNEIYEIQADTFQQ, LFSLRSLNLAWNKIAIIDPNAFST, and LPSLRKLDLSSNRLSSIPVTGLHG. N-linked (GlcNAc...) asparagine glycans are attached at residues asparagine 63 and asparagine 77. N-linked (GlcNAc...) asparagine glycosylation occurs at asparagine 208. Residues cysteine 348 and cysteine 373 are joined by a disulfide bond. An intrachain disulfide couples cysteine 479 to cysteine 541. Asparagine 500 carries an N-linked (GlcNAc...) asparagine glycan. Residues 554–574 form a helical membrane-spanning segment; the sequence is LFGSWLIRIGVWTIAVLALTC. An LRR 18 repeat occupies 564-585; it reads VWTIAVLALTCNALVTSTVFRA. Residues 575–593 lie on the Cytoplasmic side of the membrane; sequence NALVTSTVFRAAVYISSIK. Residues 594-614 traverse the membrane as a helical segment; sequence LLIGLIAAVNMLMGVSSAVLA. Over 615 to 638 the chain is Extracellular; that stretch reads GVDAFTFGSFAQHGAWWEQAVGCQ. Cysteine 637 and cysteine 712 are joined by a disulfide. The helical transmembrane segment at 639 to 659 threads the bilayer; the sequence is VVGFLSIFASESSVFLLTLAA. At 660-682 the chain is on the cytoplasmic side; the sequence is LERGWSVKCSAKFETQTPFPSLR. A helical transmembrane segment spans residues 683–703; it reads ATLALCALLAGTVAAVPLLGG. Over 704-723 the chain is Extracellular; the sequence is SEYSASPLCLPLPFGEPRAT. Residues 724-744 form a helical membrane-spanning segment; sequence GYMVALVLLNSLCFLVMTVAY. At 745–767 the chain is on the cytoplasmic side; the sequence is TRLYCHLEKGDLESMWDCSMVKH. The chain crosses the membrane as a helical span at residues 768 to 788; sequence VALLLFTNCILHCPVAFLSFS. Topologically, residues 789–802 are extracellular; the sequence is SLLNLTFISPEVIK. Asparagine 792 carries an N-linked (GlcNAc...) asparagine glycan. A helical transmembrane segment spans residues 803-823; the sequence is FILLVIVPLPACLNPLLYILF. Topologically, residues 824–907 are cytoplasmic; that stretch reads NPHFKEDLGS…LSSVAFVPCL (84 aa).

The protein belongs to the G-protein coupled receptor 1 family. Identified in a complex composed of RNF43, LGR5 and RSPO1. Also interacts with other R-spondin ligands, including RSPO2, RSPO3 and RSPO4.

Its subcellular location is the cell membrane. The protein resides in the golgi apparatus. It localises to the trans-Golgi network membrane. Receptor for R-spondins that potentiates the canonical Wnt signaling pathway and acts as a stem cell marker of the intestinal epithelium and the hair follicle. Upon binding to R-spondins (RSPO1, RSPO2, RSPO3 or RSPO4), associates with phosphorylated LRP6 and frizzled receptors that are activated by extracellular Wnt receptors, triggering the canonical Wnt signaling pathway to increase expression of target genes. In contrast to classical G-protein coupled receptors, does not activate heterotrimeric G-proteins to transduce the signal. Involved in the development and/or maintenance of the adult intestinal stem cells during postembryonic development. The sequence is that of Leucine-rich repeat-containing G-protein coupled receptor 5 (LGR5) from Bos taurus (Bovine).